The primary structure comprises 232 residues: Cytidylate kinase (232 aa).

19–27 (GPAGVGKTT) provides a ligand contact to ATP.

Belongs to the cytidylate kinase family. Type 1 subfamily.

It is found in the cytoplasm. The enzyme catalyses CMP + ATP = CDP + ADP. It catalyses the reaction dCMP + ATP = dCDP + ADP. The protein is Cytidylate kinase of Nitratidesulfovibrio vulgaris (strain DP4) (Desulfovibrio vulgaris).